The following is a 643-amino-acid chain: Extracellular metalloproteinase 4 (643 aa).

The N-terminal stretch at 1 to 18 (MHGLLLAGLLALPLNVLA) is a signal peptide. Positions 19–254 (HPTESHSSGI…VHSVVDYVSA (236 aa)) are excised as a propeptide. The span at 47–57 (TKSDAVPKQDD) shows a compositional bias: basic and acidic residues. Residues 47 to 71 (TKSDAVPKQDDESFTTSSTGDDNVS) form a disordered region. The span at 60–71 (FTTSSTGDDNVS) shows a compositional bias: polar residues. N-linked (GlcNAc...) asparagine glycosylation is found at Asn271 and Asn420. Residue His437 coordinates Zn(2+). Glu438 is a catalytic residue. His441 contributes to the Zn(2+) binding site. N-linked (GlcNAc...) asparagine glycans are attached at residues Asn510 and Asn553.

It belongs to the peptidase M36 family. It depends on Zn(2+) as a cofactor.

The protein localises to the secreted. Its function is as follows. Secreted metalloproteinase probably acting as a virulence factor. The protein is Extracellular metalloproteinase 4 (MEP4) of Arthroderma benhamiae (Trichophyton mentagrophytes).